The following is a 725-amino-acid chain: FYVE, RhoGEF and PH domain-containing protein 3 (725 aa).

A disordered region spans residues 1–151; it reads MESGRGSSTP…KADKDAGLAQ (151 aa). Over residues 124–136 the composition is skewed to acidic residues; that stretch reads EEADSDVGEEPDS. S128 carries the post-translational modification Phosphoserine. Positions 157–341 constitute a DH domain; it reads KLLHIAQELL…STAANHSNAA (185 aa). The region spanning 370–469 is the PH 1 domain; the sequence is ELIKEGQIQK…WIQIIQATIE (100 aa). Residues 487–532 form a disordered region; that stretch reads QDEDPSLSPDMPITSTSPVEPVVTTEGSSGAAGLEPRKLSSKTRRD. The span at 500-512 shows a compositional bias: low complexity; the sequence is TSTSPVEPVVTTE. Residues 521–532 show a composition bias toward basic and acidic residues; it reads EPRKLSSKTRRD. An FYVE-type zinc finger spans residues 532–588; it reads DKEKQSCKSCGETFNSITKRRHHCKLCGAVICGKCSEFKAENSRQSRVCRDCFLTQP. Zn(2+) contacts are provided by C538, C541, C555, C558, C563, C566, C580, and C583. Residues 604–703 enclose the PH 2 domain; it reads PSLLCGPLRL…WLETLSTAAH (100 aa). The tract at residues 703–725 is disordered; sequence HGDTAQDSPGALQLQVPMGAAAP.

It is found in the cytoplasm. It localises to the cytoskeleton. In terms of biological role, promotes the formation of filopodia. May activate CDC42, a member of the Ras-like family of Rho- and Rac proteins, by exchanging bound GDP for free GTP. Plays a role in regulating the actin cytoskeleton and cell shape. The polypeptide is FYVE, RhoGEF and PH domain-containing protein 3 (FGD3) (Homo sapiens (Human)).